The sequence spans 194 residues: MYKNFNEGMIEVITGPMFSGKSEELLKRIRTLEYAKLKPLVIKPEFDTRFSENEIVSRAGVKHKTHILKNINDVYFLLQEDKYKAVVIDEAHWFNEELVKVADDLANKGYLVIVAGLDQNYLREPFGPIPNLLAIAERVTKLQAICVKCQHAASTSFRKVAASEINLLGDFQEYEARCRKCHNAGQKEKLQKKV.

ATP is bound by residues 15–22 (GPMFSGKS) and 89–92 (DEAH). E90 (proton acceptor) is an active-site residue. Residues C146, C149, C178, and C181 each coordinate Zn(2+).

The protein belongs to the thymidine kinase family. As to quaternary structure, homotetramer.

It localises to the cytoplasm. It catalyses the reaction thymidine + ATP = dTMP + ADP + H(+). This Metamycoplasma arthritidis (strain 158L3-1) (Mycoplasma arthritidis) protein is Thymidine kinase.